We begin with the raw amino-acid sequence, 1006 residues long: Pleckstrin homology domain-containing family G member 5 (1006 aa).

Disordered stretches follow at residues 1 to 71 (MHYD…HTDD), 148 to 198 (PAKP…DILA), and 212 to 242 (EASI…GDSW). A compositionally biased stretch (acidic residues) spans 36-45 (DLEEEEEESS). 2 stretches are compositionally biased toward basic and acidic residues: residues 151–165 (PGDE…KDSK) and 183–194 (ERVDAQSRRESL). Residues 224-242 (SSCSLPSGSSGSTNTGDSW) show a composition bias toward low complexity. A DH domain is found at 336 to 528 (HQQEAVWELL…ERFIHHVNAC (193 aa)). In terms of domain architecture, PH spans 584 to 684 (QLLLEGSLRM…WVDTIYNAQN (101 aa)). Disordered stretches follow at residues 690 to 754 (RAQE…ASDG), 768 to 820 (DTLS…SAYG), and 837 to 863 (AELV…RRTP). The segment covering 704 to 726 (LEEEEDEQEEEEEEEEEEEEGED) has biased composition (acidic residues). 2 stretches are compositionally biased toward polar residues: residues 727-754 (SGTS…ASDG) and 769-785 (TLSS…SQSD). Phosphothreonine is present on T729. S734 is subject to Phosphoserine. Low complexity predominate over residues 786–803 (ETSLSTTASSATPTSELL). The segment covering 847-856 (PRVPSPPPSP) has biased composition (pro residues). S851, S876, and S881 each carry phosphoserine. Residues 950–979 (AGSHRKRCGDLPSGASPRVQPEPPPGVSAQ) are disordered.

Interacts with GIPC1/synectin and RHOA. Predominantly expressed in the peripheral nervous system and brain. Highest expression is observed in heart, lung, kidney, testis and moderate expression is present in spleen, pancreas, skeletal muscle, ovary and liver. Weakly expressed in glioblastoma (GBM) cell lines.

It localises to the cytoplasm. Its subcellular location is the perinuclear region. The protein localises to the cell membrane. It is found in the cell junction. The protein resides in the cell projection. It localises to the lamellipodium. In terms of biological role, functions as a guanine exchange factor (GEF) for RAB26 and thus regulates autophagy of synaptic vesicles in axon terminal of motoneurons. Involved in the control of neuronal cell differentiation. Plays a role in angiogenesis through regulation of endothelial cells chemotaxis. Also affects the migration, adhesion, and matrix/bone degradation in macrophages and osteoclasts. The protein is Pleckstrin homology domain-containing family G member 5 (PLEKHG5) of Homo sapiens (Human).